The primary structure comprises 702 residues: Zinc finger CCCH domain-containing protein 62 (702 aa).

Residues 1–77 are disordered; that stretch reads MAAPAADDDD…SYDDPTFDPA (77 aa). The segment covering 18–54 has biased composition (acidic residues); that stretch reads EEDDGEEEEGSEEEVESDDEEEEEGEGYDWSEEDDPE. The SAP domain occupies 132 to 166; it reads LEKLKVYECKAYLRMHKLRLSGNKEVLLTRIRGQI. Disordered regions lie at residues 288–349, 405–532, 546–602, and 634–673; these read EKHA…NTVQ, SRTS…QQQP, GGTS…RETH, and QMSQ…NPQR. Residues 298 to 325 are compositionally biased toward basic and acidic residues; it reads KTREVRIKDKENERMRRLNRNKENKSKG. Composition is skewed to polar residues over residues 326–349 and 405–419; these read QDNM…NTVQ and SRTS…QAPS. Residues 430–448 show a composition bias toward low complexity; sequence QQQQQQQPPKSIKPAPIQQ. Composition is skewed to polar residues over residues 472-502, 522-532, 546-565, and 575-591; these read SQEQ…QHGG, QQAVSYTQQQP, GGTS…NWGS, and PFTQ…NGSG. A C3H1-type zinc finger spans residues 674–702; the sequence is FRPWKPCFIYQQQGWCPYGENCKFMHDLR.

The sequence is that of Zinc finger CCCH domain-containing protein 62 from Oryza sativa subsp. japonica (Rice).